The chain runs to 438 residues: Ribosome biogenesis protein NOP53 (438 aa).

Disordered regions lie at residues 1-23 (MVAGKRTGAAKGSRHNKKYWRKG) and 247-346 (HPKY…RKKE). Positions 12-21 (GSRHNKKYWR) are enriched in basic residues. 3 stretches are compositionally biased toward basic and acidic residues: residues 265-288 (KSMKTGGEAEPKSQRVECDRMTKE), 297-318 (QKLDKEEKRRLEEKAKEQDSHN), and 325-346 (LHKELDEEEKQRHEESEVRKKE).

This sequence belongs to the NOP53 family.

The protein localises to the nucleus. It is found in the nucleolus. The protein resides in the nucleoplasm. May play a role in ribosome biogenesis, being required for integration of the 5S RNP into the ribosomal large subunit. The polypeptide is Ribosome biogenesis protein NOP53 (Caenorhabditis elegans).